Consider the following 147-residue polypeptide: 3-dehydroquinate dehydratase (147 aa).

Tyrosine 25 acts as the Proton acceptor in catalysis. Residues asparagine 76, histidine 82, and aspartate 89 each coordinate substrate. Histidine 102 functions as the Proton donor in the catalytic mechanism. Substrate is bound by residues 103–104 (IS) and arginine 113.

This sequence belongs to the type-II 3-dehydroquinase family. As to quaternary structure, homododecamer.

It catalyses the reaction 3-dehydroquinate = 3-dehydroshikimate + H2O. The protein operates within metabolic intermediate biosynthesis; chorismate biosynthesis; chorismate from D-erythrose 4-phosphate and phosphoenolpyruvate: step 3/7. In terms of biological role, catalyzes a trans-dehydration via an enolate intermediate. The sequence is that of 3-dehydroquinate dehydratase from Mycobacterium tuberculosis (strain ATCC 25177 / H37Ra).